The primary structure comprises 414 residues: Glutamyl-tRNA reductase (414 aa).

Substrate is bound by residues threonine 51–arginine 54, serine 107, glutamate 112–glutamate 114, and glutamine 118. Cysteine 52 acts as the Nucleophile in catalysis. Glycine 187–glycine 192 contributes to the NADP(+) binding site.

The protein belongs to the glutamyl-tRNA reductase family. Homodimer.

It carries out the reaction (S)-4-amino-5-oxopentanoate + tRNA(Glu) + NADP(+) = L-glutamyl-tRNA(Glu) + NADPH + H(+). It functions in the pathway porphyrin-containing compound metabolism; protoporphyrin-IX biosynthesis; 5-aminolevulinate from L-glutamyl-tRNA(Glu): step 1/2. In terms of biological role, catalyzes the NADPH-dependent reduction of glutamyl-tRNA(Glu) to glutamate 1-semialdehyde (GSA). This is Glutamyl-tRNA reductase from Sulfolobus acidocaldarius (strain ATCC 33909 / DSM 639 / JCM 8929 / NBRC 15157 / NCIMB 11770).